The primary structure comprises 121 residues: Two-component response regulator ORR8 (121 aa).

The Response regulatory domain occupies His5–Ile121. Position 55 is a 4-aspartylphosphate (Asp55).

This sequence belongs to the ARR family. Type-A subfamily. In terms of processing, two-component system major event consists of a His-to-Asp phosphorelay between a sensor histidine kinase (HK) and a response regulator (RR). In plants, the His-to-Asp phosphorelay involves an additional intermediate named Histidine-containing phosphotransfer protein (HPt). This multistep phosphorelay consists of a His-Asp-His-Asp sequential transfer of a phosphate group between first a His and an Asp of the HK protein, followed by the transfer to a conserved His of the HPt protein and finally the transfer to an Asp in the receiver domain of the RR protein. As to expression, expressed in mature leaves, and at low levels in roots, shoots and flowers.

Its function is as follows. Functions as a response regulator involved in His-to-Asp phosphorelay signal transduction system. Phosphorylation of the Asp residue in the receiver domain activates the ability of the protein to promote the transcription of target genes. Type-A response regulators seem to act as negative regulators of the cytokinin signaling. This chain is Two-component response regulator ORR8, found in Oryza sativa subsp. indica (Rice).